We begin with the raw amino-acid sequence, 229 residues long: Thiamine import ATP-binding protein ThiQ (229 aa).

One can recognise an ABC transporter domain in the interval 2 to 229 (LHLENIRVRQ…NNAEPLRPWM (228 aa)). 32-39 (GASGSGKS) lines the ATP pocket.

Belongs to the ABC transporter superfamily. Thiamine importer (TC 3.A.1.19.1) family. The complex is composed of two ATP-binding proteins (ThiQ), two transmembrane proteins (ThiP) and a solute-binding protein (ThiB).

It localises to the cell inner membrane. The enzyme catalyses thiamine(out) + ATP + H2O = thiamine(in) + ADP + phosphate + H(+). In terms of biological role, part of the ABC transporter complex ThiBPQ involved in thiamine import. Responsible for energy coupling to the transport system. The sequence is that of Thiamine import ATP-binding protein ThiQ from Jannaschia sp. (strain CCS1).